The sequence spans 96 residues: Small ribosomal subunit protein bS18 (96 aa).

The segment covering 1-22 (MYKDVDSHQRDSRSDGHQDGFK) has biased composition (basic and acidic residues). Residues 1-25 (MYKDVDSHQRDSRSDGHQDGFKKNP) form a disordered region.

It belongs to the bacterial ribosomal protein bS18 family. As to quaternary structure, part of the 30S ribosomal subunit. Forms a tight heterodimer with protein bS6.

Its function is as follows. Binds as a heterodimer with protein bS6 to the central domain of the 16S rRNA, where it helps stabilize the platform of the 30S subunit. This chain is Small ribosomal subunit protein bS18, found in Borrelia hermsii (strain HS1 / DAH).